Consider the following 709-residue polypeptide: Polyribonucleotide nucleotidyltransferase (709 aa).

Asp-482 and Asp-488 together coordinate Mg(2+). Residues 549 to 608 (PRIITMSIDPDKIREVIGPGGKVINKIIAETGVKIDIEDDGRIFIAATDTEAANKAVRII) form the KH domain. The 69-residue stretch at 618–686 (GKVYTGKVTR…KQGRINLSRK (69 aa)) folds into the S1 motif domain.

The protein belongs to the polyribonucleotide nucleotidyltransferase family. It depends on Mg(2+) as a cofactor.

It is found in the cytoplasm. The enzyme catalyses RNA(n+1) + phosphate = RNA(n) + a ribonucleoside 5'-diphosphate. Functionally, involved in mRNA degradation. Catalyzes the phosphorolysis of single-stranded polyribonucleotides processively in the 3'- to 5'-direction. The protein is Polyribonucleotide nucleotidyltransferase of Heliobacterium modesticaldum (strain ATCC 51547 / Ice1).